Reading from the N-terminus, the 219-residue chain is Thiamine-phosphate synthase (219 aa).

4-amino-2-methyl-5-(diphosphooxymethyl)pyrimidine contacts are provided by residues 48–52 (QFRQK) and N84. Positions 85 and 104 each coordinate Mg(2+). S123 lines the 4-amino-2-methyl-5-(diphosphooxymethyl)pyrimidine pocket. A 2-[(2R,5Z)-2-carboxy-4-methylthiazol-5(2H)-ylidene]ethyl phosphate-binding site is contributed by 150 to 152 (TPS). K153 serves as a coordination point for 4-amino-2-methyl-5-(diphosphooxymethyl)pyrimidine. 2-[(2R,5Z)-2-carboxy-4-methylthiazol-5(2H)-ylidene]ethyl phosphate is bound by residues G181 and 199 to 200 (IS).

The protein belongs to the thiamine-phosphate synthase family. It depends on Mg(2+) as a cofactor.

It carries out the reaction 2-[(2R,5Z)-2-carboxy-4-methylthiazol-5(2H)-ylidene]ethyl phosphate + 4-amino-2-methyl-5-(diphosphooxymethyl)pyrimidine + 2 H(+) = thiamine phosphate + CO2 + diphosphate. The catalysed reaction is 2-(2-carboxy-4-methylthiazol-5-yl)ethyl phosphate + 4-amino-2-methyl-5-(diphosphooxymethyl)pyrimidine + 2 H(+) = thiamine phosphate + CO2 + diphosphate. The enzyme catalyses 4-methyl-5-(2-phosphooxyethyl)-thiazole + 4-amino-2-methyl-5-(diphosphooxymethyl)pyrimidine + H(+) = thiamine phosphate + diphosphate. Its pathway is cofactor biosynthesis; thiamine diphosphate biosynthesis; thiamine phosphate from 4-amino-2-methyl-5-diphosphomethylpyrimidine and 4-methyl-5-(2-phosphoethyl)-thiazole: step 1/1. In terms of biological role, condenses 4-methyl-5-(beta-hydroxyethyl)thiazole monophosphate (THZ-P) and 2-methyl-4-amino-5-hydroxymethyl pyrimidine pyrophosphate (HMP-PP) to form thiamine monophosphate (TMP). The protein is Thiamine-phosphate synthase of Helicobacter pylori (strain HPAG1).